A 75-amino-acid polypeptide reads, in one-letter code: uncharacterized protein (75 aa).

The next 2 membrane-spanning stretches (helical) occupy residues 5–25 and 42–62; these read VIIC…IFEI and VAIF…GSVL.

Its subcellular location is the membrane. This is an uncharacterized protein from Saccharomyces cerevisiae (strain ATCC 204508 / S288c) (Baker's yeast).